We begin with the raw amino-acid sequence, 369 residues long: tRNA/tmRNA (uracil-C(5))-methyltransferase (369 aa).

S-adenosyl-L-methionine contacts are provided by Q192, Y221, N226, E242, and D302. C327 functions as the Nucleophile in the catalytic mechanism. E361 serves as the catalytic Proton acceptor.

The protein belongs to the class I-like SAM-binding methyltransferase superfamily. RNA M5U methyltransferase family. TrmA subfamily.

It catalyses the reaction uridine(54) in tRNA + S-adenosyl-L-methionine = 5-methyluridine(54) in tRNA + S-adenosyl-L-homocysteine + H(+). The catalysed reaction is uridine(341) in tmRNA + S-adenosyl-L-methionine = 5-methyluridine(341) in tmRNA + S-adenosyl-L-homocysteine + H(+). Dual-specificity methyltransferase that catalyzes the formation of 5-methyluridine at position 54 (m5U54) in all tRNAs, and that of position 341 (m5U341) in tmRNA (transfer-mRNA). In Haemophilus ducreyi (strain 35000HP / ATCC 700724), this protein is tRNA/tmRNA (uracil-C(5))-methyltransferase.